The chain runs to 620 residues: 1-deoxy-D-xylulose-5-phosphate synthase (620 aa).

Thiamine diphosphate contacts are provided by residues histidine 80 and 121–123; that span reads GHS. A Mg(2+)-binding site is contributed by aspartate 152. Residues 153-154, asparagine 181, tyrosine 288, and glutamate 370 contribute to the thiamine diphosphate site; that span reads GA. Asparagine 181 serves as a coordination point for Mg(2+).

Belongs to the transketolase family. DXPS subfamily. Homodimer. Requires Mg(2+) as cofactor. Thiamine diphosphate serves as cofactor.

It catalyses the reaction D-glyceraldehyde 3-phosphate + pyruvate + H(+) = 1-deoxy-D-xylulose 5-phosphate + CO2. It participates in metabolic intermediate biosynthesis; 1-deoxy-D-xylulose 5-phosphate biosynthesis; 1-deoxy-D-xylulose 5-phosphate from D-glyceraldehyde 3-phosphate and pyruvate: step 1/1. In terms of biological role, catalyzes the acyloin condensation reaction between C atoms 2 and 3 of pyruvate and glyceraldehyde 3-phosphate to yield 1-deoxy-D-xylulose-5-phosphate (DXP). The protein is 1-deoxy-D-xylulose-5-phosphate synthase of Shigella dysenteriae serotype 1 (strain Sd197).